The primary structure comprises 942 residues: MORC family CW-type zinc finger protein 3 (942 aa).

Residues lysine 191, lysine 205, lysine 280, and lysine 293 each participate in a glycyl lysine isopeptide (Lys-Gly) (interchain with G-Cter in SUMO2) cross-link. Residues 326-353 (AYEKVGCQLKANNMGVGVVGIIECNFLK) form a nuclear matrix binding region. The CW-type zinc finger occupies 404 to 454 (KRPDQTWVQCDACLKWRKLPDGIDQLPEKWYCSNNPDPQFRNCEVPEEPED). Zn(2+) is bound by residues cysteine 413, cysteine 416, cysteine 435, and cysteine 446. Residues 503 to 594 (SFSPVKESVP…ENSTPKPAVD (92 aa)) form an RNA binding region. A phosphoserine mark is found at serine 517 and serine 543. Lysine 558 participates in a covalent cross-link: Glycyl lysine isopeptide (Lys-Gly) (interchain with G-Cter in SUMO2). Serine 563 is modified (phosphoserine). A Glycyl lysine isopeptide (Lys-Gly) (interchain with G-Cter in SUMO1); alternate cross-link involves residue lysine 604. Lysine 604 is covalently cross-linked (Glycyl lysine isopeptide (Lys-Gly) (interchain with G-Cter in SUMO2); alternate). Positions 623–654 (PKPCVQASSTSTSTSRSDPGITVSTQTDAPGL) are disordered. Residues 630-639 (SSTSTSTSRS) are compositionally biased toward low complexity. Glycyl lysine isopeptide (Lys-Gly) (interchain with G-Cter in SUMO1); alternate cross-links involve residues lysine 657, lysine 658, and lysine 743. Residues lysine 657, lysine 658, and lysine 743 each participate in a glycyl lysine isopeptide (Lys-Gly) (interchain with G-Cter in SUMO2); alternate cross-link. Residues 696–874 (SHQLQELRSE…KSTGQQAAAD (179 aa)) are a coiled coil. Serine 768 is subject to Phosphoserine. Lysine 797 is covalently cross-linked (Glycyl lysine isopeptide (Lys-Gly) (interchain with G-Cter in SUMO1); alternate). Lysine 797 is covalently cross-linked (Glycyl lysine isopeptide (Lys-Gly) (interchain with G-Cter in SUMO2); alternate).

Homodimer. The sumoylated form interacts with PML (via SUMO-interacting motif). Interacts with TP53. Post-translationally, sumoylation is involved in interaction with PML and localization to PML nuclear bodies.

It is found in the nucleus. It localises to the nucleoplasm. The protein localises to the nucleus matrix. The protein resides in the PML body. Its subcellular location is the chromosome. With respect to regulation, dimerization of the ATPase domain is strictly required for the catalytic activity and binding to double-stranded DNA. Disrupting the interface between ATPase and the CW domains releases autoinhibition since the CW domain sterically impedes binding of the ATPase domain to DNA. Its function is as follows. Nuclear matrix protein which forms MORC3-NBs (nuclear bodies) via an ATP-dependent mechanism and plays a role in innate immunity by restricting different viruses through modulation of the IFN response. Mechanistically, possesses a primary antiviral function through a MORC3-regulated element that activates IFNB1, and this function is guarded by a secondary IFN-repressing function. Sumoylated MORC3-NBs associates with PML-NBs and recruits TP53 and SP100, thus regulating TP53 activity. Binds RNA in vitro. Histone methylation reader which binds to non-methylated (H3K4me0), monomethylated (H3K4me1), dimethylated (H3K4me2) and trimethylated (H3K4me3) 'Lys-4' on histone H3. The order of binding preference is H3K4me3 &gt; H3K4me2 &gt; H3K4me1 &gt; H3K4me0. This Mus musculus (Mouse) protein is MORC family CW-type zinc finger protein 3.